Consider the following 624-residue polypeptide: Chaperone protein HtpG (624 aa).

The a; substrate-binding stretch occupies residues 1–336 (MKGQETRGFQ…SSDLPLNVSR (336 aa)). The interval 337-552 (EILQDSTVTR…ADEMSTQMAK (216 aa)) is b. A c region spans residues 553–624 (LFAAAGQKVP…IRRMNQLLVS (72 aa)).

This sequence belongs to the heat shock protein 90 family. Homodimer.

The protein resides in the cytoplasm. Functionally, molecular chaperone. Has ATPase activity. The sequence is that of Chaperone protein HtpG from Escherichia coli O1:K1 / APEC.